Reading from the N-terminus, the 708-residue chain is RUN and FYVE domain-containing protein 1 (708 aa).

A compositionally biased stretch (basic and acidic residues) spans 1 to 17; it reads MADREGGCAAGRGRELE. Positions 1–57 are disordered; that stretch reads MADREGGCAAGRGRELEPELEPGPGPGSALEPGEEFEIVDRSQLPGPGDLRSATRPR. Residues 139–271 enclose the RUN domain; the sequence is DADHAPLQQF…LDANLCLKGE (133 aa). Residues 321–374 are a coiled coil; that stretch reads TVGDLQTKIDGLEKTNSKLQEELSAATDRICSLQEEQQQLREQNELIRERSEKS. A phosphotyrosine mark is found at Tyr389 and Tyr400. Residues 405-617 adopt a coiled-coil conformation; the sequence is KQLKEEKKVR…QALQEMGLHL (213 aa). The disordered stretch occupies residues 493–522; it reads QVMSSMKQMEERLQHSERARQGAEERSHKL. Residues 500–522 are compositionally biased toward basic and acidic residues; the sequence is QMEERLQHSERARQGAEERSHKL. The interval 615–625 is interaction with RAB4; it reads LHLSQSKLKME. At Ser620 the chain carries Phosphoserine. Residues 642–700 form an FYVE-type zinc finger; the sequence is DDEATHCRQCEKEFSISRRKHHCRNCGHIFCNTCSSNELALPSYPKPVRVCDSCHTLLL. 8 residues coordinate Zn(2+): Cys648, Cys651, Cys664, Cys667, Cys672, Cys675, Cys692, and Cys695.

As to quaternary structure, self-assembles through coiled coil domains to drive ELVA (endo-lysosomal vesicular assembly) formation. Interacts with BMX. May interact with SSB. Interacts with RAB4 and RAB5 that have been activated by GTP-binding. Interacts WITH RAB14 and RAB4B (GTP-bound form); the interactions allow endosomal tethering and fusion. Interacts with ARL8B (GTP-bound form); the interaction is required for RUFY1 endosomal location and promotes interaction with RAB14. Phosphorylation on Tyr-389 and/or Tyr-400 is required for interaction with BMX and endosomal targeting. In terms of tissue distribution, broadly expressed, with highest levels in lung, testis, kidney and brain.

It is found in the early endosome membrane. Its function is as follows. Activating adapter involved in cargo sorting from early/recycling endosomes. Regulates retrieval of proteins from endosomes to the trans-Golgi network through interaction with the dynein-dynactin complex. Dual effector of RAB4B and RAB14, mediates a cooperative interaction allowing endosomal tethering and fusion. Binds phospholipid vesicles containing phosphatidylinositol 3-phosphate and participates in early endosomal trafficking. In oocytes, self-assembles to form a protein matrix which hold together endolysosomes, autophagosomes and proteasomes and generate non-membrane-bound compartments called endo-lysosomal vesicular assemblies (ELVAs). In immature oocytes, ELVAs sequester ubiquitinated protein aggregates and degrade them upon oocyte maturation. In Homo sapiens (Human), this protein is RUN and FYVE domain-containing protein 1.